A 199-amino-acid chain; its full sequence is Outer-membrane lipoprotein LolB (199 aa).

The first 28 residues, 1 to 28, serve as a signal peptide directing secretion; it reads MSACPAPRSPFRWLHAFTLCLLLAVLAG. A lipid anchor (N-palmitoyl cysteine) is attached at cysteine 29. The S-diacylglycerol cysteine moiety is linked to residue cysteine 29.

Belongs to the LolB family. As to quaternary structure, monomer.

It is found in the cell outer membrane. Functionally, plays a critical role in the incorporation of lipoproteins in the outer membrane after they are released by the LolA protein. The polypeptide is Outer-membrane lipoprotein LolB (Bordetella bronchiseptica (strain ATCC BAA-588 / NCTC 13252 / RB50) (Alcaligenes bronchisepticus)).